A 201-amino-acid chain; its full sequence is Probable molybdenum cofactor guanylyltransferase (201 aa).

GTP is bound by residues L6–G8, K18, D65, and D97. D97 is a Mg(2+) binding site.

Belongs to the MobA family. It depends on Mg(2+) as a cofactor.

The protein resides in the cytoplasm. The enzyme catalyses Mo-molybdopterin + GTP + H(+) = Mo-molybdopterin guanine dinucleotide + diphosphate. Transfers a GMP moiety from GTP to Mo-molybdopterin (Mo-MPT) cofactor (Moco or molybdenum cofactor) to form Mo-molybdopterin guanine dinucleotide (Mo-MGD) cofactor. This is Probable molybdenum cofactor guanylyltransferase from Staphylococcus haemolyticus (strain JCSC1435).